Reading from the N-terminus, the 104-residue chain is Large ribosomal subunit protein uL24 (104 aa).

The protein belongs to the universal ribosomal protein uL24 family. In terms of assembly, part of the 50S ribosomal subunit.

Functionally, one of two assembly initiator proteins, it binds directly to the 5'-end of the 23S rRNA, where it nucleates assembly of the 50S subunit. Its function is as follows. One of the proteins that surrounds the polypeptide exit tunnel on the outside of the subunit. This chain is Large ribosomal subunit protein uL24, found in Flavobacterium psychrophilum (strain ATCC 49511 / DSM 21280 / CIP 103535 / JIP02/86).